The sequence spans 165 residues: Small ribosomal subunit protein bS16 (165 aa).

The tract at residues 110 to 165 (LSEANNGPTAEAITEKKKKAREDKEAKEAAEKAAAEKAAAAESEEAPAEEAAAEEA) is disordered. Residues 129 to 144 (AREDKEAKEAAEKAAA) are compositionally biased toward basic and acidic residues. A compositionally biased stretch (acidic residues) spans 151–165 (ESEEAPAEEAAAEEA).

This sequence belongs to the bacterial ribosomal protein bS16 family.

This Corynebacterium glutamicum (strain R) protein is Small ribosomal subunit protein bS16.